Reading from the N-terminus, the 395-residue chain is Extracellular cysteine protease (395 aa).

The N-terminal stretch at 1–30 is a signal peptide; the sequence is MKKKLSYMITIMLAFTLSLALGLFFNSAHA. Residues 31–221 constitute a propeptide that is removed on maturation; sequence DSLPQKNGAN…TLEYQSTRNE (191 aa). Active-site residues include cysteine 245, histidine 341, and asparagine 362.

It belongs to the peptidase C47 family. Proteolytically cleaved.

It is found in the secreted. Its subcellular location is the cell wall. Its function is as follows. Cysteine protease able to cleave elastin, insulin, myoglobin, fibronectin, fibrinogen, HMW-kininogen, alpha-1-protease inhibitor and alpha-1-antitrypsin. Along with other extracellular proteases may contribute to the colonization and infection of human tissues. The chain is Extracellular cysteine protease (ecpA) from Staphylococcus epidermidis (strain ATCC 35984 / DSM 28319 / BCRC 17069 / CCUG 31568 / BM 3577 / RP62A).